Here is a 71-residue protein sequence, read N- to C-terminus: DNA-directed RNA polymerases II, IV and V subunit 10 (71 aa).

4 residues coordinate Zn(2+): cysteine 7, cysteine 10, cysteine 44, and cysteine 45.

It belongs to the archaeal Rpo10/eukaryotic RPB10 RNA polymerase subunit family. Component of the RNA polymerase II, IV and V complexes. Interacts with NRPD1.

The protein resides in the nucleus. DNA-dependent RNA polymerase catalyzes the transcription of DNA into RNA using the four ribonucleoside triphosphates as substrates. Component of RNA polymerase II which synthesizes mRNA precursors and many functional non-coding RNAs. Pol II is the central component of the basal RNA polymerase II transcription machinery. It is composed of mobile elements that move relative to each other. Component of RNA polymerases IV and V which mediate short-interfering RNAs (siRNA) accumulation and subsequent RNA-directed DNA methylation-dependent (RdDM) transcriptional gene silencing (TGS) of endogenous repeated sequences, including transposable elements. The protein is DNA-directed RNA polymerases II, IV and V subunit 10 (NRPB10) of Arabidopsis thaliana (Mouse-ear cress).